Consider the following 456-residue polypeptide: Probable multidrug resistance protein NorM (456 aa).

The next 12 helical transmembrane spans lie at 13–34 (QFLT…MTFF), 54–76 (SSFW…PIIA), 95–117 (LYIA…PTIL), 132–154 (HFLN…RSFI), 161–183 (RVTM…CFIF), 193–215 (GAGS…VILI), 244–266 (IGVP…TILM), 286–308 (LLYA…ETGA), 321–343 (GMTA…RDII), 358–380 (MHFL…VLGA), 387–409 (VAIT…GYGL), and 414–436 (LGPF…ILSI).

Belongs to the multi antimicrobial extrusion (MATE) (TC 2.A.66.1) family.

Its subcellular location is the cell membrane. Functionally, multidrug efflux pump. The sequence is that of Probable multidrug resistance protein NorM (norM) from Listeria innocua serovar 6a (strain ATCC BAA-680 / CLIP 11262).